We begin with the raw amino-acid sequence, 341 residues long: Diguanylate cyclase DgcP (341 aa).

One can recognise a GAF domain in the interval 18 to 154 (SLESLVRQLL…LFAGLIAQYI (137 aa)). The region spanning 204–337 (HKIMIAFIDL…KQKTPFVAHP (134 aa)) is the GGDEF domain. Residue Asp-212 coordinates Mg(2+). Substrate contacts are provided by Asn-220, His-225, and Asp-229. Residue Asp-255 participates in Mg(2+) binding. The active-site Proton acceptor is the Asp-255.

As to quaternary structure, homodimer. The cofactor is Mg(2+).

The catalysed reaction is 2 GTP = 3',3'-c-di-GMP + 2 diphosphate. The protein operates within purine metabolism; 3',5'-cyclic di-GMP biosynthesis. Its function is as follows. Catalyzes the synthesis of cyclic-di-GMP (c-di-GMP) via the condensation of 2 GTP molecules. Cyclic-di-GMP is a second messenger which controls cell surface-associated traits in bacteria. This chain is Diguanylate cyclase DgcP, found in Escherichia coli (strain K12).